A 422-amino-acid chain; its full sequence is Probable tRNA pseudouridine synthase D (422 aa).

The active-site Nucleophile is the Asp-83. The 223-residue stretch at Gly-164–Lys-386 folds into the TRUD domain.

Belongs to the pseudouridine synthase TruD family.

The enzyme catalyses uridine(13) in tRNA = pseudouridine(13) in tRNA. Functionally, could be responsible for synthesis of pseudouridine from uracil-13 in transfer RNAs. This Thermococcus sibiricus (strain DSM 12597 / MM 739) protein is Probable tRNA pseudouridine synthase D.